The following is a 192-amino-acid chain: Ciliary microtubule-associated protein 3 (192 aa).

Interacts with proteins involved in ciliary transport, including ARL13B, CETN1, KIF3A, RAB6A, RAB8A, TUBB1 and TUBG1. Interacts with AURKA.

It localises to the cytoplasmic vesicle. The protein localises to the golgi apparatus. Its subcellular location is the trans-Golgi network. It is found in the cytoplasm. Functionally, during primary cilia disassembly, involved in cilia disassembly. Required specifically to control cilia retraction as well as the liberation and duplication of the basal body/centrosome. May act by stimulating AURKA activity at the basal body in a cell cycle-dependent manner. The chain is Ciliary microtubule-associated protein 3 (CIMAP3) from Bos taurus (Bovine).